The sequence spans 82 residues: ATP synthase subunit c, chloroplastic (82 aa).

2 helical membrane-spanning segments follow: residues 3 to 23 (PIISAASVIGAGLSIGLAAIG) and 57 to 77 (LAFMEALTIYGLVVALALLFA).

This sequence belongs to the ATPase C chain family. As to quaternary structure, F-type ATPases have 2 components, F(1) - the catalytic core - and F(0) - the membrane proton channel. F(1) has five subunits: alpha(3), beta(3), gamma(1), delta(1), epsilon(1). F(0) has four main subunits: a(1), b(1), b'(1) and c(10-14). The alpha and beta chains form an alternating ring which encloses part of the gamma chain. F(1) is attached to F(0) by a central stalk formed by the gamma and epsilon chains, while a peripheral stalk is formed by the delta, b and b' chains.

The protein localises to the plastid. The protein resides in the chloroplast thylakoid membrane. F(1)F(0) ATP synthase produces ATP from ADP in the presence of a proton or sodium gradient. F-type ATPases consist of two structural domains, F(1) containing the extramembraneous catalytic core and F(0) containing the membrane proton channel, linked together by a central stalk and a peripheral stalk. During catalysis, ATP synthesis in the catalytic domain of F(1) is coupled via a rotary mechanism of the central stalk subunits to proton translocation. Functionally, key component of the F(0) channel; it plays a direct role in translocation across the membrane. A homomeric c-ring of between 10-14 subunits forms the central stalk rotor element with the F(1) delta and epsilon subunits. The protein is ATP synthase subunit c, chloroplastic of Phaeodactylum tricornutum (strain CCAP 1055/1).